The sequence spans 704 residues: Probable ferric reduction oxidase 1 (704 aa).

The Cytoplasmic segment spans residues 1 to 16; that stretch reads MGVGEMNKEVIDKVIK. Residues 17–36 form a helical membrane-spanning segment; the sequence is FLMMVILMGTIVIWIMMPTS. Over 37-62 the chain is Lumenal; that stretch reads TYKEIWLTSMRAKLGKSIYYGRPGVN. A helical membrane pass occupies residues 63–81; the sequence is LLVYMFPMILLAFLGCIYL. Over 82 to 115 the chain is Cytoplasmic; it reads HLKKSTTVNQFNSGVEKKRAKFGALRRPMLVNGP. A helical membrane pass occupies residues 116 to 139; it reads LGIVTVTEVMFLTMFMALLLWSLA. Over 140 to 207 the chain is Lumenal; that stretch reads NYMYRTFVNV…VGLTSESSIK (68 aa). Residues 174-294 form the Ferric oxidoreductase domain; the sequence is GIVGNICLAF…YLYIVFMLFF (121 aa). The helical transmembrane segment at 208 to 231 threads the bilayer; sequence YHIWLGHLVMIIFTSHGLCYFIYW. Positions 209 and 223 each coordinate heme. Over 232-282 the chain is Cytoplasmic; it reads ISKNQLVSKMLEWDRTAVSNLAGEIALVAGLMMWVTTYPKIRRRLFEVFFY. A helical transmembrane segment spans residues 283-307; it reads SHYLYIVFMLFFVFHVGISHALIPL. The heme site is built by His-284 and His-297. The Lumenal segment spans residues 308–329; it reads PGFYIFLVDRFLRFLQSRNNVK. One can recognise an FAD-binding FR-type domain in the interval 323–430; it reads QSRNNVKLVS…EGPYGPSSTD (108 aa). The helical transmembrane segment at 330-350 threads the bilayer; that stretch reads LVSARVLPCDTVELNFSKNPM. Topologically, residues 351–550 are cytoplasmic; it reads LMYSPTSTMF…PISPILGPNS (200 aa). Residue 372-375 participates in FAD binding; it reads HPFT. Residue 422–425 participates in NAD(+) binding; that stretch reads GPYG. A helical membrane pass occupies residues 551–573; it reads WLCLAAILSSSFMIFIVIIAIIT. Over 574–592 the chain is Lumenal; that stretch reads RYHIHPIDQNSEKYTWAYK. A helical membrane pass occupies residues 593–614; it reads SLIYLVSISITVVTTSTAAMLW. Topologically, residues 615–704 are cytoplasmic; sequence NKKKYYAKND…LHFESISFSW (90 aa).

It belongs to the ferric reductase (FRE) family. Requires FAD as cofactor. As to expression, expressed in siliques. Detected in roots.

Its subcellular location is the membrane. The enzyme catalyses 2 a Fe(II)-siderophore + NAD(+) + H(+) = 2 a Fe(III)-siderophore + NADH. In terms of biological role, ferric chelate reductase involved in iron reduction in roots. May participate in the transport of electrons to a Fe(3+) ion via FAD and heme intermediates. The protein is Probable ferric reduction oxidase 1 (FRO1) of Arabidopsis thaliana (Mouse-ear cress).